The chain runs to 224 residues: UPF0173 metal-dependent hydrolase EAT1b_0495 (224 aa).

The protein belongs to the UPF0173 family.

This chain is UPF0173 metal-dependent hydrolase EAT1b_0495, found in Exiguobacterium sp. (strain ATCC BAA-1283 / AT1b).